Reading from the N-terminus, the 506-residue chain is Gallate 1-beta-glucosyltransferase 84A23 (506 aa).

Residue histidine 20 is the Proton acceptor of the active site. Histidine 20 is an an anthocyanidin binding site. 6 residues coordinate UDP-alpha-D-glucose: glutamine 345, histidine 360, tryptophan 363, asparagine 364, serine 365, and glutamate 368. Glycine 383 contacts an anthocyanidin. Residues aspartate 384 and glutamine 385 each coordinate UDP-alpha-D-glucose.

The protein belongs to the UDP-glycosyltransferase family. In terms of tissue distribution, expressed in roots of the seedlings.

It is found in the cytoplasm. The catalysed reaction is 3,4,5-trihydroxybenzoate + UDP-alpha-D-glucose = 1-O-galloyl-beta-D-glucose + UDP. It catalyses the reaction 3,4-dihydroxybenzoate + UDP-alpha-D-glucose = 1-O-(3,4-dihydroxy-benzoyl)-beta-D-glucose + UDP. It carries out the reaction 4-hydroxybenzoate + UDP-alpha-D-glucose = 4-(beta-D-glucosyloxy)benzoate + UDP + H(+). The enzyme catalyses (E)-cinnamate + UDP-alpha-D-glucose = 1-O-(trans-cinnamoyl)-beta-D-glucose + UDP. The catalysed reaction is (E)-sinapate + UDP-alpha-D-glucose = 1-O-(trans-sinapoyl)-beta-D-glucose + UDP. It catalyses the reaction (E)-4-coumarate + UDP-alpha-D-glucose = 1-O-(trans-4-coumaroyl)-beta-D-glucose + UDP. It carries out the reaction (E)-caffeate + UDP-alpha-D-glucose = 1-O-[(E)-caffeoyl]-beta-D-glucose + UDP. The enzyme catalyses (E)-ferulate + UDP-alpha-D-glucose = 1-O-[(E)-feruloyl]-beta-D-glucose + UDP. The catalysed reaction is genistein + UDP-alpha-D-glucose = genistein 7-O-beta-D-glucoside + UDP + H(+). It catalyses the reaction apigenin + UDP-alpha-D-glucose = apigenin 7-O-beta-D-glucoside + UDP + H(+). It carries out the reaction luteolin + UDP-alpha-D-glucose = luteolin 7-O-beta-D-glucoside + UDP + H(+). Functionally, glucosyltransferase that catalyzes the formation of 1-O-beta-D-glucose esters with hydroxybenzoic acids and cinnamic acid including its derivatives as preferred glucosyl acceptors. Has significant activity with gallic acid (3,4,5-trihydroxybenzoic acid), 3,4-dihydroxybenzoic acid, 4-hydroxybenzoic acid, cinnamic acid, sinapic acid, coumaric acid, caffeic acid and ferulic acid in vitro. Gallic acid is the predicted native substrate of the enzyme, which thus catalyzes the formation of 1-O-galloyl-beta-D-glucose, the first committed step of hydrolyzable tannins (HTs) biosynthesis, with punicalagin isomers being the major HTs of pomegranate. Catalyzes the formation of flavonoid glucosides with genistein, apigenin and luteolin in vitro. Has low activity with benzoic acid, 2-hydroxybenzoic acid, 3-hydroxybenzoic acid, 2,4-dihydroxybenzoic acid, naringenin and quercetin. No activity with catechol, resveratrol, chlorogenic acid, catechin and epicatechin (building blocks of proanthocyanidins) or cyanidin, delphinidin and pelargonidin (the three anthocyanidins). This chain is Gallate 1-beta-glucosyltransferase 84A23, found in Punica granatum (Pomegranate).